A 370-amino-acid polypeptide reads, in one-letter code: Caffeic acid 3-O-methyltransferase (370 aa).

The propeptide occupies 1–2; the sequence is MG. Substrate is bound at residue 135 to 141; the sequence is MNQDKVL. Residues 167-185 are substrate binding; that stretch reads AFEYHGTDPRFNKVFNRGM. S-adenosyl-L-methionine is bound by residues Gly-213, Asp-236, Asp-256, Met-257, and Lys-270. Catalysis depends on His-274, which acts as the Proton acceptor.

This sequence belongs to the class I-like SAM-binding methyltransferase superfamily. Cation-independent O-methyltransferase family. COMT subfamily. Homodimer.

It catalyses the reaction (E)-caffeate + S-adenosyl-L-methionine = (E)-ferulate + S-adenosyl-L-homocysteine + H(+). The protein operates within aromatic compound metabolism; phenylpropanoid biosynthesis. Its function is as follows. Catalyzes the conversion of caffeic acid to ferulic acid and of 5-hydroxyferulic acid to sinapic acid. The resulting products may subsequently be converted to the corresponding alcohols that are incorporated into lignins. The polypeptide is Caffeic acid 3-O-methyltransferase (COMT) (Clarkia breweri (Fairy fans)).